The chain runs to 444 residues: Argininosuccinate synthase (444 aa).

Residues 18–26 (AFSGGLDTS) and A44 contribute to the ATP site. Y100 is a binding site for L-citrulline. G130 and T132 together coordinate ATP. L-aspartate contacts are provided by T132, N136, and D137. N136 provides a ligand contact to L-citrulline. Position 137 (D137) interacts with ATP. L-citrulline-binding residues include R140 and S193. Residue D195 coordinates ATP. Residues T202, E204, and E281 each coordinate L-citrulline.

The protein belongs to the argininosuccinate synthase family. Type 2 subfamily. In terms of assembly, homotetramer.

It is found in the cytoplasm. The catalysed reaction is L-citrulline + L-aspartate + ATP = 2-(N(omega)-L-arginino)succinate + AMP + diphosphate + H(+). The protein operates within amino-acid biosynthesis; L-arginine biosynthesis; L-arginine from L-ornithine and carbamoyl phosphate: step 2/3. The polypeptide is Argininosuccinate synthase (Haemophilus influenzae (strain PittGG)).